The following is a 100-amino-acid chain: MVTLNHYLILSSLLFMIGLVGVMRRKNLLMLFFSTEIMLNAVNVGLVAAGKYMNDMAGQMFSFFIIAVAASEVAVGLGLLILWYKKNGSLDLDNLQLMKG.

3 helical membrane-spanning segments follow: residues 2 to 22 (VTLNHYLILSSLLFMIGLVGV), 28 to 48 (LLMLFFSTEIMLNAVNVGLVA), and 63 to 83 (FFIIAVAASEVAVGLGLLILW).

Belongs to the complex I subunit 4L family. NDH-1 is composed of 14 different subunits. Subunits NuoA, H, J, K, L, M, N constitute the membrane sector of the complex.

It localises to the cell inner membrane. It catalyses the reaction a quinone + NADH + 5 H(+)(in) = a quinol + NAD(+) + 4 H(+)(out). NDH-1 shuttles electrons from NADH, via FMN and iron-sulfur (Fe-S) centers, to quinones in the respiratory chain. The immediate electron acceptor for the enzyme in this species is believed to be ubiquinone. Couples the redox reaction to proton translocation (for every two electrons transferred, four hydrogen ions are translocated across the cytoplasmic membrane), and thus conserves the redox energy in a proton gradient. This chain is NADH-quinone oxidoreductase subunit K, found in Wolinella succinogenes (strain ATCC 29543 / DSM 1740 / CCUG 13145 / JCM 31913 / LMG 7466 / NCTC 11488 / FDC 602W) (Vibrio succinogenes).